Reading from the N-terminus, the 205-residue chain is Non-structural protein NS3 (205 aa).

A disordered region spans residues 177–205 (GTRSPETGCRKVTSGLPHGASGGSGTRQG). Residues 196-205 (ASGGSGTRQG) are compositionally biased toward gly residues.

This sequence belongs to the orbivirus NS3 family.

Its function is as follows. May play a role in the release of virions from infected cells. This is Non-structural protein NS3 (Segment-10) from Broadhaven virus (BRD).